A 553-amino-acid polypeptide reads, in one-letter code: Fusion glycoprotein F0 (553 aa).

Positions 1 to 31 are cleaved as a signal peptide; that stretch reads MGPRPSTKNPVPMMLTVRVALVLSCICPANS. The Extracellular segment spans residues 32–500; that stretch reads IDGRPLAAAG…VNVKLTSTSA (469 aa). 5 disulfide bridges follow: cysteine 76/cysteine 199, cysteine 338/cysteine 347, cysteine 362/cysteine 370, cysteine 394/cysteine 399, and cysteine 401/cysteine 424. Asparagine 85 carries N-linked (GlcNAc...) asparagine; by host glycosylation. Residues 117-141 are fusion peptide; that stretch reads FIGAIIGGVALGVATAAQITAAAAL. Residues 142-170 adopt a coiled-coil conformation; it reads IQAKQNAANILRLKESIAATNEAVHEVTD. Asparagine 191 carries N-linked (GlcNAc...) asparagine; by host glycosylation. A glycan (N-linked (GlcNAc...) asparagine; by host) is linked at asparagine 366. Asparagine 447 and asparagine 471 each carry an N-linked (GlcNAc...) asparagine; by host glycan. Residues 466–491 are a coiled coil; the sequence is ELGNVNNSISNALNKLEESNSKLDKV. The chain crosses the membrane as a helical span at residues 501-521; it reads LITYIVLTIISLVFGILSLVL. The Cytoplasmic portion of the chain corresponds to 522–553; that stretch reads ACYLMYKQKAQQKTLLWLGNNTLDQMRATTKM. A lipid anchor (S-palmitoyl cysteine; by host) is attached at cysteine 523.

The protein belongs to the paramyxoviruses fusion glycoprotein family. In terms of assembly, homotrimer of disulfide-linked F1-F2. The inactive precursor F0 is glycosylated and proteolytically cleaved into F1 and F2 to be functionally active. The cleavage is mediated by cellular proteases during the transport and maturation of the polypeptide.

Its subcellular location is the virion membrane. It localises to the host cell membrane. In terms of biological role, class I viral fusion protein. Under the current model, the protein has at least 3 conformational states: pre-fusion native state, pre-hairpin intermediate state, and post-fusion hairpin state. During viral and plasma cell membrane fusion, the heptad repeat (HR) regions assume a trimer-of-hairpins structure, positioning the fusion peptide in close proximity to the C-terminal region of the ectodomain. The formation of this structure appears to drive apposition and subsequent fusion of viral and plasma cell membranes. Directs fusion of viral and cellular membranes leading to delivery of the nucleocapsid into the cytoplasm. This fusion is pH independent and occurs directly at the outer cell membrane. The trimer of F1-F2 (F protein) probably interacts with HN at the virion surface. Upon HN binding to its cellular receptor, the hydrophobic fusion peptide is unmasked and interacts with the cellular membrane, inducing the fusion between cell and virion membranes. Later in infection, F proteins expressed at the plasma membrane of infected cells could mediate fusion with adjacent cells to form syncytia, a cytopathic effect that could lead to tissue necrosis. This Gallus gallus (Chicken) protein is Fusion glycoprotein F0 (F).